Reading from the N-terminus, the 511-residue chain is GMP synthase [glutamine-hydrolyzing] (511 aa).

In terms of domain architecture, Glutamine amidotransferase type-1 spans 5 to 195 (PIVVLDFGSQ…AKHICGCEST (191 aa)). Catalysis depends on Cys82, which acts as the Nucleophile. Active-site residues include His169 and Glu171. In terms of domain architecture, GMPS ATP-PPase spans 196–386 (WNMGSFAKEQ…LGLPKSMISR (191 aa)). 223–229 (SGGVDSS) provides a ligand contact to ATP.

Homodimer.

The catalysed reaction is XMP + L-glutamine + ATP + H2O = GMP + L-glutamate + AMP + diphosphate + 2 H(+). It functions in the pathway purine metabolism; GMP biosynthesis; GMP from XMP (L-Gln route): step 1/1. Catalyzes the synthesis of GMP from XMP. This Aliarcobacter butzleri (strain RM4018) (Arcobacter butzleri) protein is GMP synthase [glutamine-hydrolyzing].